Here is a 164-residue protein sequence, read N- to C-terminus: Thiol peroxidase (164 aa).

In terms of domain architecture, Thioredoxin spans 18–163 (VKTGETAPEF…FESALEAYRN (146 aa)). Cys60 acts as the Cysteine sulfenic acid (-SOH) intermediate in catalysis. Cys60 and Cys93 form a disulfide bridge.

The protein belongs to the peroxiredoxin family. Tpx subfamily. Homodimer.

It carries out the reaction a hydroperoxide + [thioredoxin]-dithiol = an alcohol + [thioredoxin]-disulfide + H2O. Functionally, thiol-specific peroxidase that catalyzes the reduction of hydrogen peroxide and organic hydroperoxides to water and alcohols, respectively. Plays a role in cell protection against oxidative stress by detoxifying peroxides. In Staphylococcus saprophyticus subsp. saprophyticus (strain ATCC 15305 / DSM 20229 / NCIMB 8711 / NCTC 7292 / S-41), this protein is Thiol peroxidase.